We begin with the raw amino-acid sequence, 500 residues long: Putative glucokinase-2 (500 aa).

Serine 2 carries the post-translational modification N-acetylserine. Serine 2 carries the phosphoserine modification. The region spanning 12-498 (EALEDAVVEI…SGVGAALCAL (487 aa)) is the Hexokinase domain. Residues 74–217 (NGTERGVLLA…LSMINVVALT (144 aa)) are hexokinase small subdomain. Lysine 110 contacts ATP. A glucose-binding region spans residues 159-185 (KMGFTFSYPVDQTSLSSGTLIRWTKSF). Residues 218-487 (NDTVGTFLSH…RKIHLRLAKD (270 aa)) are hexokinase large subdomain. At serine 470 the chain carries Phosphoserine. 487–492 (DGSGVG) is a binding site for ATP.

Belongs to the hexokinase family.

It localises to the cytoplasm. The catalysed reaction is D-glucose + ATP = D-glucose 6-phosphate + ADP + H(+). It functions in the pathway carbohydrate degradation; glycolysis; D-glyceraldehyde 3-phosphate and glycerone phosphate from D-glucose: step 1/4. Functionally, putative glucokinase involved in phosphorylation of aldohexoses and glucose uptake. Involved in sporulation. Required for the full activation of the early meiotic inducer IME1. This is Putative glucokinase-2 (EMI2) from Saccharomyces cerevisiae (strain ATCC 204508 / S288c) (Baker's yeast).